Consider the following 353-residue polypeptide: Protein MGF 360-10L (353 aa).

The stretch at 57-89 is one ANK repeat; sequence DLNTALMLATKENNYQLIKLFTEWGADINYGLI. N172 carries an N-linked (GlcNAc...) asparagine; by host glycan. A run of 2 helical transmembrane segments spans residues 206-228 and 249-271; these read LNTWWLICALCFNKLFDLHNLYE and NFLTIYYCFILGANINLAMIASI. N-linked (GlcNAc...) asparagine; by host glycosylation is present at N342.

The protein belongs to the asfivirus MGF 360 family.

The protein localises to the host membrane. Its function is as follows. Plays a role in virus cell tropism, and may be required for efficient virus replication in macrophages. This African swine fever virus (isolate Warthog/Namibia/Wart80/1980) (ASFV) protein is Protein MGF 360-10L.